The sequence spans 541 residues: uncharacterized protein (541 aa).

A run of 5 helical transmembrane segments spans residues 10–32 (LNNQ…KINI), 39–57 (SSAI…YTLP), 62–84 (TLGL…FFSL), 91–113 (LSLG…TYLF), and 146–168 (APAA…IQII). RCK C-terminal domains lie at 183 to 260 (LNKE…DDLE) and 268 to 352 (TPVD…IFGN). The next 6 membrane-spanning stretches (helical) occupy residues 357 to 375 (SYNF…GFIL), 385 to 407 (SGIF…SNIY), 428 to 447 (GLVL…ILAT), 452 to 474 (GLQL…VFIC), 481 to 500 (PFLS…PGLA), and 515 to 537 (YATV…IFIV).

It belongs to the AAE transporter (TC 2.A.81) family.

The protein localises to the cell membrane. This is an uncharacterized protein from Desulfotalea psychrophila (strain LSv54 / DSM 12343).